A 74-amino-acid chain; its full sequence is Defensin Lc-def (74 aa).

An N-terminal signal peptide occupies residues 1–27 (MEKKTVAALSFLFIVLFVAQEIAVTEA). Disulfide bonds link C30–C74, C41–C62, C47–C68, and C51–C70.

Its subcellular location is the secreted. In terms of biological role, has antifungal activity against the phytopathogenic fungus A.niger VKM F-2259, but not against A.alternata VKM F-3047. Does not inhibit trypsin or chymotrypsin. In Lens culinaris subsp. culinaris (Cultivated lentil), this protein is Defensin Lc-def.